We begin with the raw amino-acid sequence, 166 residues long: Lipoprotein signal peptidase (166 aa).

A run of 4 helical transmembrane segments spans residues 9–29, 37–57, 71–91, and 100–120; these read AGGS…FDQL, VFAY…LVYN, WQRW…CYLL, and FCTA…DRLL. Residues Asp-126 and Asp-144 contribute to the active site. The helical transmembrane segment at 136–156 threads the bilayer; sequence HWPAFNLADSAITIGAALLVF.

Belongs to the peptidase A8 family.

It localises to the cell inner membrane. The enzyme catalyses Release of signal peptides from bacterial membrane prolipoproteins. Hydrolyzes -Xaa-Yaa-Zaa-|-(S,diacylglyceryl)Cys-, in which Xaa is hydrophobic (preferably Leu), and Yaa (Ala or Ser) and Zaa (Gly or Ala) have small, neutral side chains.. It functions in the pathway protein modification; lipoprotein biosynthesis (signal peptide cleavage). Its function is as follows. This protein specifically catalyzes the removal of signal peptides from prolipoproteins. This chain is Lipoprotein signal peptidase, found in Paraburkholderia phymatum (strain DSM 17167 / CIP 108236 / LMG 21445 / STM815) (Burkholderia phymatum).